Reading from the N-terminus, the 509-residue chain is Pancreatic secretory granule membrane major glycoprotein GP2 (509 aa).

The N-terminal stretch at 1–21 (MVGSYVLWLALASCILTLASP) is a signal peptide. Positions 36–56 (DPCQNYTLLDEPSRSTENTEG) are D10C. Cystine bridges form between C38–C132, C60–C147, C82–C120, C88–C152, C113–C121, C162–C172, C166–C181, C183–C213, C201–C292, and C233–C256. N40, N97, and N109 each carry an N-linked (GlcNAc...) asparagine glycan. The EGF-like domain occupies 158–202 (ATDKCKNLCRPEEACSFLNGTWDCFCRSDLNSSDVHSLQPRLNCG). Residues N176, N188, and N232 are each glycosylated (N-linked (GlcNAc...) asparagine). The ZP-N stretch occupies residues 200-293 (NCGAKEIQVS…TILNINFQCA (94 aa)). The ZP domain maps to 200-456 (NCGAKEIQVS…PCCSRSQQRS (257 aa)). N-linked (GlcNAc...) asparagine glycosylation is found at N263 and N314. Residues 294 to 317 (YPLDMKVSLQTALHPIVSSLNISV) are flexible ZP-N/ZP-C linker. Residues 318–329 (DGEGEFTVRMAL) form an internal hydrophobic patch (IHP) region. The ZP-C stretch occupies residues 318 to 456 (DGEGEFTVRM…PCCSRSQQRS (139 aa)). 3 disulfides stabilise this stretch: C373–C433, C394–C449, and C438–C445. The interval 463 to 471 (PARVLDLGP) is external hydrophobic patch (EHP). Residue D484 is the site of GPI-anchor amidated aspartate attachment. A propeptide spans 485 to 509 (GTPSTAGFLLAWPMLLLPILLAELF) (removed in mature form).

In terms of assembly, interacts with SYCN. Interacts with bacterial adhesin fimH. N-glycosylated. In terms of tissue distribution, expressed in pancreas.

The protein resides in the zymogen granule membrane. The protein localises to the secreted. Its subcellular location is the cell membrane. It is found in the apical cell membrane. It localises to the membrane raft. The protein resides in the endosome. Functions as an intestinal M-cell transcytotic receptor specific of type-I-piliated bacteria that participates in the mucosal immune response toward these bacteria. At the apical membrane of M-cells it binds fimH, a protein of the bacteria type I pilus tip. Internalizes bound bacteria, like E.coli and S.typhimurium, from the lumen of the intestine and delivers them, through M-cells, to the underlying organized lymphoid follicles where they are captured by antigen-presenting dendritic cells to elicit a mucosal immune response. In Canis lupus familiaris (Dog), this protein is Pancreatic secretory granule membrane major glycoprotein GP2.